Reading from the N-terminus, the 307-residue chain is Phosphate import ATP-binding protein PstB (307 aa).

A disordered region spans residues 1–30 (MSETTYTTTEDTDDTNSTDSMVGTTTGETD). The region spanning 48–302 (LGVDDLDVYY…PQSERVEDYI (255 aa)) is the ABC transporter domain. 80 to 87 (GPSGCGKS) serves as a coordination point for ATP.

Belongs to the ABC transporter superfamily. Phosphate importer (TC 3.A.1.7) family. The complex is composed of two ATP-binding proteins (PstB), two transmembrane proteins (PstC and PstA) and a solute-binding protein (PstS).

The protein resides in the cell membrane. It carries out the reaction phosphate(out) + ATP + H2O = ADP + 2 phosphate(in) + H(+). Its function is as follows. Part of the ABC transporter complex PstSACB involved in phosphate import. Responsible for energy coupling to the transport system. The sequence is that of Phosphate import ATP-binding protein PstB from Haloquadratum walsbyi (strain DSM 16790 / HBSQ001).